Reading from the N-terminus, the 289-residue chain is Testis-expressed protein 26 (289 aa).

A disordered region spans residues 1-26 (MEQPGPRAPDPSLCHHNLQPTDDPNW). Mn regions lie at residues 30–42 (ATTM…PKTG), 69–83 (QTQY…SHSK), 144–157 (ISLT…RSKA), 179–193 (DTEF…AKIP), and 233–247 (QTTY…YPDF).

The polypeptide is Testis-expressed protein 26 (TEX26) (Homo sapiens (Human)).